Reading from the N-terminus, the 53-residue chain is Conotoxin-like peptide 1 (53 aa).

The signal sequence occupies residues 1 to 18; sequence MGVKSALFIMAVFAAANV. 3 disulfide bridges follow: C25-C39, C32-C43, and C38-C50.

The protein localises to the secreted. In Orgyia pseudotsugata multicapsid polyhedrosis virus (OpMNPV), this protein is Conotoxin-like peptide 1 (CTL-1).